A 148-amino-acid polypeptide reads, in one-letter code: ASCH domain-containing ribonuclease (148 aa).

The 58-residue stretch at 13-70 folds into the ASCH domain; it reads SLWPEFAKAIVSGKKTVEFRRRIPLPALSARIWIYATRPVKSVIGFAYLEAIVQGDVN.

Mn(2+) is required as a cofactor. Ni(2+) serves as cofactor.

Shows sequence-specific endoribonuclease activity towards single-stranded RNA (ssRNA), with a preference for the bond between pyrimidine and adenine nucleotides. May also have 5'-exonuclease activity. The sequence is that of ASCH domain-containing ribonuclease from Zymomonas mobilis subsp. mobilis (strain ATCC 10988 / DSM 424 / LMG 404 / NCIMB 8938 / NRRL B-806 / ZM1).